The primary structure comprises 117 residues: uncharacterized protein (117 aa).

This is an uncharacterized protein from Escherichia coli (strain K12).